The primary structure comprises 882 residues: ABC transporter H family member 4 (882 aa).

Helical transmembrane passes span 4-24, 35-55, and 79-101; these read WIKL…ISVF, LLFK…LLPW, and TNGP…YAIL. In terms of domain architecture, ABC transporter spans 384–863; it reads FSYENKFSSE…NAQVYYKLLG (480 aa). 418-425 lines the ATP pocket; that stretch reads GQNRSGKS. 3 disordered regions span residues 522–617, 634–669, and 710–730; these read FDPD…YSTI, SMSQ…NSGV, and NSGG…NQRS. 2 stretches are compositionally biased toward low complexity: residues 528–617 and 647–667; these read IPPT…YSTI and NGNN…INNS. Acidic residues predominate over residues 715 to 724; the sequence is DESDDDDEEA.

This sequence belongs to the ABC transporter superfamily. ABCH family.

The protein resides in the membrane. The protein is ABC transporter H family member 4 (abcH4) of Dictyostelium discoideum (Social amoeba).